A 216-amino-acid polypeptide reads, in one-letter code: Large ribosomal subunit protein bL25 (216 aa).

2 disordered regions span residues 1–21 (MAETQTLKAEAREKGSKGAVR) and 192–216 (SADNEAKTEEAGEDKSEEKSSGKED). Over residues 195–216 (NEAKTEEAGEDKSEEKSSGKED) the composition is skewed to basic and acidic residues.

Belongs to the bacterial ribosomal protein bL25 family. CTC subfamily. Part of the 50S ribosomal subunit; part of the 5S rRNA/L5/L18/L25 subcomplex. Contacts the 5S rRNA. Binds to the 5S rRNA independently of L5 and L18.

Functionally, this is one of the proteins that binds to the 5S RNA in the ribosome where it forms part of the central protuberance. The sequence is that of Large ribosomal subunit protein bL25 from Parvibaculum lavamentivorans (strain DS-1 / DSM 13023 / NCIMB 13966).